An 83-amino-acid chain; its full sequence is Small ribosomal subunit protein bS18 (83 aa).

It belongs to the bacterial ribosomal protein bS18 family. In terms of assembly, part of the 30S ribosomal subunit. Forms a tight heterodimer with protein bS6.

In terms of biological role, binds as a heterodimer with protein bS6 to the central domain of the 16S rRNA, where it helps stabilize the platform of the 30S subunit. In Desulfosudis oleivorans (strain DSM 6200 / JCM 39069 / Hxd3) (Desulfococcus oleovorans), this protein is Small ribosomal subunit protein bS18.